Reading from the N-terminus, the 129-residue chain is Large ribosomal subunit protein uL22 (129 aa).

The protein belongs to the universal ribosomal protein uL22 family. As to quaternary structure, part of the 50S ribosomal subunit.

Functionally, this protein binds specifically to 23S rRNA; its binding is stimulated by other ribosomal proteins, e.g. L4, L17, and L20. It is important during the early stages of 50S assembly. It makes multiple contacts with different domains of the 23S rRNA in the assembled 50S subunit and ribosome. In terms of biological role, the globular domain of the protein is located near the polypeptide exit tunnel on the outside of the subunit, while an extended beta-hairpin is found that lines the wall of the exit tunnel in the center of the 70S ribosome. The chain is Large ribosomal subunit protein uL22 from Beijerinckia indica subsp. indica (strain ATCC 9039 / DSM 1715 / NCIMB 8712).